A 252-amino-acid chain; its full sequence is Hydroxyacylglutathione hydrolase (252 aa).

The Zn(2+) site is built by His-54, His-56, Asp-58, His-59, His-111, Asp-130, and His-170.

The protein belongs to the metallo-beta-lactamase superfamily. Glyoxalase II family. As to quaternary structure, monomer. Zn(2+) serves as cofactor.

It catalyses the reaction an S-(2-hydroxyacyl)glutathione + H2O = a 2-hydroxy carboxylate + glutathione + H(+). The protein operates within secondary metabolite metabolism; methylglyoxal degradation; (R)-lactate from methylglyoxal: step 2/2. Thiolesterase that catalyzes the hydrolysis of S-D-lactoyl-glutathione to form glutathione and D-lactic acid. The sequence is that of Hydroxyacylglutathione hydrolase from Francisella tularensis subsp. novicida (strain U112).